We begin with the raw amino-acid sequence, 246 residues long: Uridylate kinase (246 aa).

K20–G23 is a binding site for ATP. Positions G28–G33 are involved in allosteric activation by GTP. Position 62 (G62) interacts with UMP. 2 residues coordinate ATP: G63 and R67. UMP-binding positions include D82 and T143–T150. Residues T170, Y176, and D179 each coordinate ATP.

Belongs to the UMP kinase family. As to quaternary structure, homohexamer.

Its subcellular location is the cytoplasm. It carries out the reaction UMP + ATP = UDP + ADP. Its pathway is pyrimidine metabolism; CTP biosynthesis via de novo pathway; UDP from UMP (UMPK route): step 1/1. Allosterically activated by GTP. Inhibited by UTP. Its function is as follows. Catalyzes the reversible phosphorylation of UMP to UDP. The polypeptide is Uridylate kinase (Cereibacter sphaeroides (strain ATCC 17025 / ATH 2.4.3) (Rhodobacter sphaeroides)).